A 273-amino-acid polypeptide reads, in one-letter code: Hydroxyethylthiazole kinase (273 aa).

Position 47 (methionine 47) interacts with substrate. ATP is bound by residues arginine 123 and threonine 169. Position 196 (glycine 196) interacts with substrate.

It belongs to the Thz kinase family. Mg(2+) is required as a cofactor.

The catalysed reaction is 5-(2-hydroxyethyl)-4-methylthiazole + ATP = 4-methyl-5-(2-phosphooxyethyl)-thiazole + ADP + H(+). Its pathway is cofactor biosynthesis; thiamine diphosphate biosynthesis; 4-methyl-5-(2-phosphoethyl)-thiazole from 5-(2-hydroxyethyl)-4-methylthiazole: step 1/1. Its function is as follows. Catalyzes the phosphorylation of the hydroxyl group of 4-methyl-5-beta-hydroxyethylthiazole (THZ). The chain is Hydroxyethylthiazole kinase from Desulfotalea psychrophila (strain LSv54 / DSM 12343).